Reading from the N-terminus, the 482-residue chain is ATP synthase subunit beta (482 aa).

ATP is bound at residue G161 to T168.

This sequence belongs to the ATPase alpha/beta chains family. As to quaternary structure, F-type ATPases have 2 components, CF(1) - the catalytic core - and CF(0) - the membrane proton channel. CF(1) has five subunits: alpha(3), beta(3), gamma(1), delta(1), epsilon(1). CF(0) has four main subunits: a(1), b(1), b'(1) and c(9-12).

The protein localises to the cellular thylakoid membrane. It catalyses the reaction ATP + H2O + 4 H(+)(in) = ADP + phosphate + 5 H(+)(out). Its function is as follows. Produces ATP from ADP in the presence of a proton gradient across the membrane. The catalytic sites are hosted primarily by the beta subunits. This chain is ATP synthase subunit beta, found in Microcystis aeruginosa (strain NIES-843 / IAM M-2473).